The following is a 629-amino-acid chain: Extracellular metalloproteinase 10 (629 aa).

The first 19 residues, 1–19, serve as a signal peptide directing secretion; that stretch reads MHGLLLAAGLLSLPLYTIA. Residues 20-240 constitute a propeptide that is removed on maturation; sequence HTQPSGALSR…VHNVVDYVAH (221 aa). Residues N281 and N331 are each glycosylated (N-linked (GlcNAc...) asparagine). H424 lines the Zn(2+) pocket. E425 is an active-site residue. H428 is a Zn(2+) binding site. N469 and N617 each carry an N-linked (GlcNAc...) asparagine glycan.

It belongs to the peptidase M36 family. It depends on Zn(2+) as a cofactor.

It localises to the secreted. In terms of biological role, secreted metalloproteinase that allows assimilation of proteinaceous substrates and probably acts as a virulence factor. The polypeptide is Extracellular metalloproteinase 10 (MEP10) (Coccidioides posadasii (strain C735) (Valley fever fungus)).